We begin with the raw amino-acid sequence, 260 residues long: Putative protein phosphatase (260 aa).

Residues 9–254 (FTGLSKKGPV…DNITAALVNL (246 aa)) form the PPM-type phosphatase domain.

The enzyme catalyses O-phospho-L-seryl-[protein] + H2O = L-seryl-[protein] + phosphate. It carries out the reaction O-phospho-L-threonyl-[protein] + H2O = L-threonyl-[protein] + phosphate. The chain is Putative protein phosphatase from Mycoplasma genitalium (strain ATCC 33530 / DSM 19775 / NCTC 10195 / G37) (Mycoplasmoides genitalium).